The primary structure comprises 416 residues: Histidine--tRNA ligase (416 aa).

It belongs to the class-II aminoacyl-tRNA synthetase family.

Its subcellular location is the cytoplasm. It carries out the reaction tRNA(His) + L-histidine + ATP = L-histidyl-tRNA(His) + AMP + diphosphate + H(+). The sequence is that of Histidine--tRNA ligase (hisS) from Methanocaldococcus jannaschii (strain ATCC 43067 / DSM 2661 / JAL-1 / JCM 10045 / NBRC 100440) (Methanococcus jannaschii).